Consider the following 502-residue polypeptide: MSIIDTRTPEPKRFISGATGDWEVVIGMEVHAQVTSESKLFSGASTAFGAEPNSNVSLVDAAMPGMLPVINLECVRQAVRTGIGLNAQINLKSVFDRKNYFYPDLPQGYQISQFKQPIVGEGKIMISVGPDNKGQFEDVEIGIERLHLEQDAGKSMHDQHPTMSYVDLNRSGVALMEIVSKPDLRSSDEARAYLTKLRTIVRYLGTCDGNMDEGSMRADVNVSVRRPGGEFGTRCEIKNVNSIRFVGQAIEYEARRQIAILEDGGVIDQETRLFDPVKGETRSMRSKEEAHDYRYFPDPDLLPLEFDQAFVDALAAKLPELPDVKKQRLVETLGISVYDASILVTEKAIADYYEAVAEGRDGKAAANWVINDLLGALNKAGKDIEESPISPAQLGAIIDLIKEGTISGKIAKDLFEIVWNEGGDPKKLVEERGMKQVTDTGAIEKAVDDVIAANPDKVEQAKAKAKPTLAGWFVGQVMKATGGKANPQAVNELVKSKLGIEE.

Belongs to the GatB/GatE family. GatB subfamily. In terms of assembly, heterotrimer of A, B and C subunits.

It carries out the reaction L-glutamyl-tRNA(Gln) + L-glutamine + ATP + H2O = L-glutaminyl-tRNA(Gln) + L-glutamate + ADP + phosphate + H(+). The catalysed reaction is L-aspartyl-tRNA(Asn) + L-glutamine + ATP + H2O = L-asparaginyl-tRNA(Asn) + L-glutamate + ADP + phosphate + 2 H(+). In terms of biological role, allows the formation of correctly charged Asn-tRNA(Asn) or Gln-tRNA(Gln) through the transamidation of misacylated Asp-tRNA(Asn) or Glu-tRNA(Gln) in organisms which lack either or both of asparaginyl-tRNA or glutaminyl-tRNA synthetases. The reaction takes place in the presence of glutamine and ATP through an activated phospho-Asp-tRNA(Asn) or phospho-Glu-tRNA(Gln). The chain is Aspartyl/glutamyl-tRNA(Asn/Gln) amidotransferase subunit B from Brucella suis (strain ATCC 23445 / NCTC 10510).